The chain runs to 623 residues: V-type proton ATPase catalytic subunit A (623 aa).

Residue 252 to 259 participates in ATP binding; it reads GAFGCGKT.

Belongs to the ATPase alpha/beta chains family. V-ATPase is a heteromultimeric enzyme composed of a peripheral catalytic V1 complex (main components: subunits A, B, C, D, E, and F) attached to an integral membrane V0 proton pore complex (main component: the proteolipid protein).

The enzyme catalyses ATP + H2O + 4 H(+)(in) = ADP + phosphate + 5 H(+)(out). Its function is as follows. Catalytic subunit of the peripheral V1 complex of vacuolar ATPase. V-ATPase vacuolar ATPase is responsible for acidifying a variety of intracellular compartments in eukaryotic cells. This Beta vulgaris (Sugar beet) protein is V-type proton ATPase catalytic subunit A.